A 210-amino-acid polypeptide reads, in one-letter code: CKLF-like MARVEL transmembrane domain-containing protein 2B (210 aa).

A run of 4 helical transmembrane segments spans residues 35 to 55, 65 to 85, 103 to 123, and 127 to 147; these read FWAQGHAECKSLIMILLIAAM, PIVILLLTMELSICAFFFFLY, LMNDLACSTFLIGGIFFALEA, and LPVPYLTGMILMGVTAFISII. The MARVEL domain occupies 35 to 157; it reads FWAQGHAECK…DLCLQRRQFK (123 aa).

This sequence belongs to the chemokine-like factor family.

Its subcellular location is the membrane. The sequence is that of CKLF-like MARVEL transmembrane domain-containing protein 2B (Cmtm2b) from Mus musculus (Mouse).